The following is a 293-amino-acid chain: Extracellular metalloprotease PODANS_2_14170 (293 aa).

Positions 1-18 (MRFSLALAAAGLAQTAFA) are cleaved as a signal peptide. Asn60 carries an N-linked (GlcNAc...) asparagine glycan. His206 serves as a coordination point for Zn(2+). The active site involves Glu207. A Zn(2+)-binding site is contributed by His210. Cys242 and Cys269 are joined by a disulfide.

This sequence belongs to the peptidase M43B family.

The protein resides in the secreted. Its function is as follows. Secreted metalloproteinase that allows assimilation of proteinaceous substrates. This Podospora anserina (strain S / ATCC MYA-4624 / DSM 980 / FGSC 10383) (Pleurage anserina) protein is Extracellular metalloprotease PODANS_2_14170.